We begin with the raw amino-acid sequence, 71 residues long: UPF0346 protein SP70585_0986 (71 aa).

The protein belongs to the UPF0346 family.

This Streptococcus pneumoniae (strain 70585) protein is UPF0346 protein SP70585_0986.